The chain runs to 409 residues: U-box domain-containing protein 28 (409 aa).

Residues 10–84 (TVPCFFKCPI…DHWSDSINRR (75 aa)) form the U-box domain. ARM repeat units lie at residues 178–218 (RLSN…FIAV), 219–261 (DAES…AIAS), and 263–304 (KRVK…AISS).

The catalysed reaction is S-ubiquitinyl-[E2 ubiquitin-conjugating enzyme]-L-cysteine + [acceptor protein]-L-lysine = [E2 ubiquitin-conjugating enzyme]-L-cysteine + N(6)-ubiquitinyl-[acceptor protein]-L-lysine.. It participates in protein modification; protein ubiquitination. Functionally, functions as an E3 ubiquitin ligase. The polypeptide is U-box domain-containing protein 28 (PUB28) (Arabidopsis thaliana (Mouse-ear cress)).